We begin with the raw amino-acid sequence, 872 residues long: Bifunctional uridylyltransferase/uridylyl-removing enzyme (872 aa).

The tract at residues 1-332 (MALPNKVKKL…PKHHQPIIQE (332 aa)) is uridylyltransferase. Positions 333 to 691 (LDRNFERIGN…VSNKAMHGGT (359 aa)) are uridylyl-removing. The 123-residue stretch at 450 to 572 (VDEHTHRLIN…VKTERQLDYL (123 aa)) folds into the HD domain. 2 ACT domains span residues 692–773 (QVFV…FKKN) and 799–872 (LIEI…AETE).

It belongs to the GlnD family. Requires Mg(2+) as cofactor.

The catalysed reaction is [protein-PII]-L-tyrosine + UTP = [protein-PII]-uridylyl-L-tyrosine + diphosphate. It catalyses the reaction [protein-PII]-uridylyl-L-tyrosine + H2O = [protein-PII]-L-tyrosine + UMP + H(+). With respect to regulation, uridylyltransferase (UTase) activity is inhibited by glutamine, while glutamine activates uridylyl-removing (UR) activity. Its function is as follows. Modifies, by uridylylation and deuridylylation, the PII regulatory proteins (GlnB and homologs), in response to the nitrogen status of the cell that GlnD senses through the glutamine level. Under low glutamine levels, catalyzes the conversion of the PII proteins and UTP to PII-UMP and PPi, while under higher glutamine levels, GlnD hydrolyzes PII-UMP to PII and UMP (deuridylylation). Thus, controls uridylylation state and activity of the PII proteins, and plays an important role in the regulation of nitrogen assimilation and metabolism. The protein is Bifunctional uridylyltransferase/uridylyl-removing enzyme of Pseudoalteromonas translucida (strain TAC 125).